Here is a 669-residue protein sequence, read N- to C-terminus: UvrABC system protein C (669 aa).

In terms of domain architecture, GIY-YIG spans 16–95; the sequence is TNPGVYRFRD…IKEFKPRFNV (80 aa). The 36-residue stretch at 207-242 folds into the UVR domain; sequence KRFIGRLEKDMAAAVAELDYERAARVRDDIIALRKV.

Belongs to the UvrC family. In terms of assembly, interacts with UvrB in an incision complex.

The protein resides in the cytoplasm. In terms of biological role, the UvrABC repair system catalyzes the recognition and processing of DNA lesions. UvrC both incises the 5' and 3' sides of the lesion. The N-terminal half is responsible for the 3' incision and the C-terminal half is responsible for the 5' incision. This chain is UvrABC system protein C, found in Arthrobacter sp. (strain FB24).